The primary structure comprises 473 residues: Major myo-inositol transporter IolT (473 aa).

12 helical membrane passes run 14–34 (IILV…VLNG), 49–69 (AFTE…GAVF), 83–103 (ILFL…APNV), 111–131 (FVLG…LAEM), 146–166 (LMIV…GTTM), 172–192 (VWRF…FGMI), 256–276 (IVFI…NSIM), 295–315 (IGNI…IWLL), 325–345 (MTGL…SLVL), 350–370 (ALPY…QGAI), 389–409 (LGMG…SFTF), and 411–431 (ILLA…LGIC).

It belongs to the major facilitator superfamily. Sugar transporter (TC 2.A.1.1) family.

The protein localises to the cell membrane. It functions in the pathway polyol metabolism; myo-inositol degradation into acetyl-CoA. Its function is as follows. Major myo-inositol uptake transporter. The polypeptide is Major myo-inositol transporter IolT (iolT) (Bacillus subtilis (strain 168)).